The following is a 568-amino-acid chain: Estrogen receptor beta (568 aa).

The segment at 1–177 is modulating; sequence MHQQSPVDDV…SLRGKADMHY (177 aa). 2 consecutive NR C4-type zinc fingers follow at residues 178-198 and 214-238; these read CAVC…CEGC and CPAT…LRKC. Residues 178 to 243 constitute a DNA-binding region (nuclear receptor); the sequence is CAVCSDYASG…RLRKCYEVGM (66 aa). Residues 300–536 enclose the NR LBD domain; the sequence is TPEELIARIM…DLLLEMLDAH (237 aa).

This sequence belongs to the nuclear hormone receptor family. NR3 subfamily. In terms of assembly, binds DNA as a homodimer. Can form a heterodimer with ER-alpha.

It is found in the nucleus. Its function is as follows. Binds estrogens with an affinity similar to that of ER-alpha, and activates expression of reporter genes containing estrogen response elements (ERE) in an estrogen-dependent manner. The sequence is that of Estrogen receptor beta (esr2) from Oncorhynchus mykiss (Rainbow trout).